A 101-amino-acid polypeptide reads, in one-letter code: Large ribosomal subunit protein uL24 (101 aa).

Belongs to the universal ribosomal protein uL24 family. Part of the 50S ribosomal subunit.

Functionally, one of two assembly initiator proteins, it binds directly to the 5'-end of the 23S rRNA, where it nucleates assembly of the 50S subunit. Its function is as follows. One of the proteins that surrounds the polypeptide exit tunnel on the outside of the subunit. The protein is Large ribosomal subunit protein uL24 of Borreliella afzelii (strain PKo) (Borrelia afzelii).